The chain runs to 278 residues: Orotidine 5'-phosphate decarboxylase (278 aa).

Substrate contacts are provided by residues aspartate 40, lysine 65–histidine 67, aspartate 96–threonine 105, tyrosine 230, and arginine 248. Lysine 98 serves as the catalytic Proton donor.

Belongs to the OMP decarboxylase family.

The enzyme catalyses orotidine 5'-phosphate + H(+) = UMP + CO2. It participates in pyrimidine metabolism; UMP biosynthesis via de novo pathway; UMP from orotate: step 2/2. This chain is Orotidine 5'-phosphate decarboxylase (pyrG), found in Penicillium chrysogenum (Penicillium notatum).